The sequence spans 396 residues: 8-amino-7-oxononanoate synthase (396 aa).

Residue R29 participates in substrate binding. Pyridoxal 5'-phosphate is bound at residue 116 to 117 (GY). Residue H141 coordinates substrate. Pyridoxal 5'-phosphate-binding residues include S187, H215, and T243. N6-(pyridoxal phosphate)lysine is present on K246. T360 provides a ligand contact to substrate.

The protein belongs to the class-II pyridoxal-phosphate-dependent aminotransferase family. BioF subfamily. As to quaternary structure, homodimer. The cofactor is pyridoxal 5'-phosphate.

It carries out the reaction 6-carboxyhexanoyl-[ACP] + L-alanine + H(+) = (8S)-8-amino-7-oxononanoate + holo-[ACP] + CO2. It functions in the pathway cofactor biosynthesis; biotin biosynthesis. Catalyzes the decarboxylative condensation of pimeloyl-[acyl-carrier protein] and L-alanine to produce 8-amino-7-oxononanoate (AON), [acyl-carrier protein], and carbon dioxide. This Nitrosospira multiformis (strain ATCC 25196 / NCIMB 11849 / C 71) protein is 8-amino-7-oxononanoate synthase.